A 191-amino-acid chain; its full sequence is Elongation factor P (191 aa).

This sequence belongs to the elongation factor P family.

It localises to the cytoplasm. Its pathway is protein biosynthesis; polypeptide chain elongation. Its function is as follows. Involved in peptide bond synthesis. Stimulates efficient translation and peptide-bond synthesis on native or reconstituted 70S ribosomes in vitro. Probably functions indirectly by altering the affinity of the ribosome for aminoacyl-tRNA, thus increasing their reactivity as acceptors for peptidyl transferase. The chain is Elongation factor P from Bartonella henselae (strain ATCC 49882 / DSM 28221 / CCUG 30454 / Houston 1) (Rochalimaea henselae).